Consider the following 323-residue polypeptide: Methenyltetrahydromethanopterin cyclohydrolase (323 aa).

It belongs to the MCH family.

The protein resides in the cytoplasm. It carries out the reaction 5,10-methenyl-5,6,7,8-tetrahydromethanopterin + H2O = N(5)-formyl-5,6,7,8-tetrahydromethanopterin + H(+). Its pathway is one-carbon metabolism; methanogenesis from CO(2); 5,10-methenyl-5,6,7,8-tetrahydromethanopterin from CO(2): step 3/3. In terms of biological role, catalyzes the reversible interconversion of 5-formyl-H(4)MPT to methenyl-H(4)MPT(+). In Methanobrevibacter smithii (strain ATCC 35061 / DSM 861 / OCM 144 / PS), this protein is Methenyltetrahydromethanopterin cyclohydrolase.